Consider the following 104-residue polypeptide: Circadian clock oscillator protein KaiB (104 aa).

The protein belongs to the KaiB family. In terms of assembly, the KaiABC complex composition changes during the circadian cycle to control KaiC phosphorylation. Complexes KaiC(6), KaiA(2-4):KaiC(6), KaiB(6):KaiC(6) and KaiC(6):KaiB(6):KaiA(12) are among the most important forms, many form cooperatively. Undergoes a major conformational rearrangment; in the free state forms homotetramers as a dimer of dimers. When bound to the CI domain of KaiC switches to a monomeric thioredoxin-fold (KaiB(fs)). KaiB(fs) binds CikA, leading it to dephosphorylate phospho-RpaA.

Functionally, key component of the KaiABC oscillator complex, which constitutes the main circadian regulator in cyanobacteria. Complex composition changes during the circadian cycle to control KaiC phosphorylation. KaiA stimulates KaiC autophosphorylation, while KaiB sequesters KaiA, leading to KaiC autodephosphorylation. Phospho-Ser-431 KaiC accumulation triggers binding of KaiB to form the KaiB(6):KaiC(6) complex, leading to changes in output regulators CikA and SasA. KaiB switches to a thioredoxin-like fold (KaiB(fs)) when bound to KaiC. KaiB(6):KaiC(6) formation exposes a site for KaiA binding that sequesters KaiA from KaiC, making the KaiC(6):KaiB(6):KaiA(12) complex that results in KaiC autodephosphorylation. A metamorphic protein which reversibly switches between an inactive tetrameric fold and a rare, thioredoxin-like monomeric fold (KaiB(fs)). KaiB(fs) binds phospho-KaiC, KaiA and CikA. KaiA and CikA compete for binding to KaiB(fs), and KaiB(fs) and SasA compete for binding to KaiC, thus the clock oscillator and output signal pathway are tightly coupled. In Parasynechococcus marenigrum (strain WH8102), this protein is Circadian clock oscillator protein KaiB.